A 490-amino-acid chain; its full sequence is Ribulose bisphosphate carboxylase large chain (490 aa).

Positions 127 and 177 each coordinate substrate. Residue Lys-179 is the Proton acceptor of the active site. Lys-181 is a substrate binding site. Residues Lys-205, Asp-207, and Glu-208 each coordinate Mg(2+). Residue Lys-205 is modified to N6-carboxylysine. His-297 serves as the catalytic Proton acceptor. The substrate site is built by Arg-298, His-330, and Ser-382.

This sequence belongs to the RuBisCO large chain family. Type I subfamily. As to quaternary structure, heterohexadecamer of 8 large chains and 8 small chains. Mg(2+) serves as cofactor.

The protein localises to the plastid. The protein resides in the chloroplast. It catalyses the reaction 2 (2R)-3-phosphoglycerate + 2 H(+) = D-ribulose 1,5-bisphosphate + CO2 + H2O. The enzyme catalyses D-ribulose 1,5-bisphosphate + O2 = 2-phosphoglycolate + (2R)-3-phosphoglycerate + 2 H(+). Its function is as follows. RuBisCO catalyzes two reactions: the carboxylation of D-ribulose 1,5-bisphosphate, the primary event in carbon dioxide fixation, as well as the oxidative fragmentation of the pentose substrate in the photorespiration process. Both reactions occur simultaneously and in competition at the same active site. The sequence is that of Ribulose bisphosphate carboxylase large chain from Thalassiosira pseudonana (Marine diatom).